A 120-amino-acid chain; its full sequence is NAD(P)H-quinone oxidoreductase subunit 3 (120 aa).

The next 3 helical transmembrane spans lie at 6 to 26 (GYDAFLGFLLISAAVPVLALV), 64 to 84 (MFALVFVIFDVETVFLYPWAV), and 89 to 109 (LGLLAFIEALIFIAILIVALA).

It belongs to the complex I subunit 3 family. NDH-1 can be composed of about 15 different subunits; different subcomplexes with different compositions have been identified which probably have different functions.

It is found in the cellular thylakoid membrane. It catalyses the reaction a plastoquinone + NADH + (n+1) H(+)(in) = a plastoquinol + NAD(+) + n H(+)(out). It carries out the reaction a plastoquinone + NADPH + (n+1) H(+)(in) = a plastoquinol + NADP(+) + n H(+)(out). Functionally, NDH-1 shuttles electrons from an unknown electron donor, via FMN and iron-sulfur (Fe-S) centers, to quinones in the respiratory and/or the photosynthetic chain. The immediate electron acceptor for the enzyme in this species is believed to be plastoquinone. Couples the redox reaction to proton translocation, and thus conserves the redox energy in a proton gradient. Cyanobacterial NDH-1 also plays a role in inorganic carbon-concentration. This is NAD(P)H-quinone oxidoreductase subunit 3 from Prochlorococcus marinus (strain MIT 9211).